The sequence spans 316 residues: tRNA dimethylallyltransferase (316 aa).

17-24 (GPTASGKT) serves as a coordination point for ATP. Substrate is bound at residue 19-24 (TASGKT). Interaction with substrate tRNA regions lie at residues 42 to 45 (DSAL), 166 to 170 (QRLSR), and 247 to 252 (RCVGYR).

This sequence belongs to the IPP transferase family. Monomer. The cofactor is Mg(2+).

The catalysed reaction is adenosine(37) in tRNA + dimethylallyl diphosphate = N(6)-dimethylallyladenosine(37) in tRNA + diphosphate. Its function is as follows. Catalyzes the transfer of a dimethylallyl group onto the adenine at position 37 in tRNAs that read codons beginning with uridine, leading to the formation of N6-(dimethylallyl)adenosine (i(6)A). In Klebsiella pneumoniae (strain 342), this protein is tRNA dimethylallyltransferase.